A 225-amino-acid chain; its full sequence is 3-dehydroquinate dehydratase (225 aa).

3-dehydroquinate is bound by residues 30–32 (EWR) and R62. The active-site Proton donor/acceptor is the H118. K143 functions as the Schiff-base intermediate with substrate in the catalytic mechanism. 3-dehydroquinate-binding residues include R186, S205, and Q209.

Belongs to the type-I 3-dehydroquinase family. As to quaternary structure, homodimer.

It carries out the reaction 3-dehydroquinate = 3-dehydroshikimate + H2O. Its pathway is metabolic intermediate biosynthesis; chorismate biosynthesis; chorismate from D-erythrose 4-phosphate and phosphoenolpyruvate: step 3/7. Functionally, involved in the third step of the chorismate pathway, which leads to the biosynthesis of aromatic amino acids. Catalyzes the cis-dehydration of 3-dehydroquinate (DHQ) and introduces the first double bond of the aromatic ring to yield 3-dehydroshikimate. The chain is 3-dehydroquinate dehydratase from Streptococcus mutans serotype c (strain ATCC 700610 / UA159).